Consider the following 111-residue polypeptide: DNA-directed RNA polymerase subunit Rpo11 (111 aa).

The protein belongs to the archaeal Rpo11/eukaryotic RPB11/RPC19 RNA polymerase subunit family. Part of the RNA polymerase complex.

It localises to the cytoplasm. It catalyses the reaction RNA(n) + a ribonucleoside 5'-triphosphate = RNA(n+1) + diphosphate. DNA-dependent RNA polymerase (RNAP) catalyzes the transcription of DNA into RNA using the four ribonucleoside triphosphates as substrates. This is DNA-directed RNA polymerase subunit Rpo11 from Thermoplasma volcanium (strain ATCC 51530 / DSM 4299 / JCM 9571 / NBRC 15438 / GSS1).